A 309-amino-acid polypeptide reads, in one-letter code: Protein FdhE (309 aa).

It belongs to the FdhE family.

It localises to the cytoplasm. Its function is as follows. Necessary for formate dehydrogenase activity. The sequence is that of Protein FdhE from Salmonella choleraesuis (strain SC-B67).